Here is a 348-residue protein sequence, read N- to C-terminus: MSDRLTLLRPDDWHIHLRDGAVLTNTVADVARTFGRAIIMPNLVPPVRNAAEADGYRQRILAARPAGSRFEPLMVLYLTDRTQPEEIREAKASGFVHAAKLYPAGATTNSDSGVTSIDKIFPVLEAMAEAGMPLLIHGEVTRGDVDVFDREKIFIDEHMRRVVERFPTLKVVFEHITTGDAVQFVNEASANVGATITAHHLLYNRNHMLVGGIRPHFYCLPILKRNTHQEALLDAATSGSAKFFLGTDSAPHAQHAKEAACGCAGCYTAYAAIELYAEAFEQRNALDKLEAFASLNGPRFYGLPANTDRITLVRDEWTAPTSLPFGELTVIPLRAGEKLRWRLLEEHA.

Residues His-14 and His-16 each contribute to the Zn(2+) site. Residues 16-18 (HLR) and Asn-42 each bind substrate. Zn(2+) is bound by residues Lys-100, His-137, and His-175. Residue Lys-100 is modified to N6-carboxylysine. His-137 provides a ligand contact to substrate. Leu-220 lines the substrate pocket. Asp-248 contributes to the Zn(2+) binding site. Asp-248 is an active-site residue. Positions 252 and 264 each coordinate substrate.

It belongs to the metallo-dependent hydrolases superfamily. DHOase family. Class II DHOase subfamily. In terms of assembly, homodimer. Zn(2+) serves as cofactor.

The catalysed reaction is (S)-dihydroorotate + H2O = N-carbamoyl-L-aspartate + H(+). Its pathway is pyrimidine metabolism; UMP biosynthesis via de novo pathway; (S)-dihydroorotate from bicarbonate: step 3/3. Its function is as follows. Catalyzes the reversible cyclization of carbamoyl aspartate to dihydroorotate. The sequence is that of Dihydroorotase from Pseudomonas fluorescens (strain Pf0-1).